The primary structure comprises 179 residues: Large ribosomal subunit protein uL5 (179 aa).

This sequence belongs to the universal ribosomal protein uL5 family. Part of the 50S ribosomal subunit; part of the 5S rRNA/L5/L18/L25 subcomplex. Contacts the 5S rRNA and the P site tRNA. Forms a bridge to the 30S subunit in the 70S ribosome.

This is one of the proteins that bind and probably mediate the attachment of the 5S RNA into the large ribosomal subunit, where it forms part of the central protuberance. In the 70S ribosome it contacts protein S13 of the 30S subunit (bridge B1b), connecting the 2 subunits; this bridge is implicated in subunit movement. Contacts the P site tRNA; the 5S rRNA and some of its associated proteins might help stabilize positioning of ribosome-bound tRNAs. This is Large ribosomal subunit protein uL5 from Staphylococcus aureus (strain MW2).